We begin with the raw amino-acid sequence, 682 residues long: Potassium-transporting ATPase ATP-binding subunit (682 aa).

A run of 4 helical transmembrane segments spans residues 34 to 54, 62 to 82, 219 to 239, and 254 to 274; these read PVMFIVWIGSLLTTCISIAMA, ALFSAAISGWLWVTVLFANFA, IALTILLIALTIVFLLATATL, and VLVALLVCLIPTTIGGLLSAI. Asp307 serves as the catalytic 4-aspartylphosphate intermediate. ATP contacts are provided by residues Asp344, Glu348, 377-384, and Lys395; that span reads FTAQSRMS. 2 residues coordinate Mg(2+): Asp518 and Asp522. A run of 3 helical transmembrane segments spans residues 588-608, 616-636, and 656-676; these read FAIIPAAFAATYPQLNALNIM, AILSAVIFNALIIVFLIPLAL, and IYGLGGLLVPFIGIKVIDLLL.

The protein belongs to the cation transport ATPase (P-type) (TC 3.A.3) family. Type IA subfamily. The system is composed of three essential subunits: KdpA, KdpB and KdpC.

Its subcellular location is the cell inner membrane. It catalyses the reaction K(+)(out) + ATP + H2O = K(+)(in) + ADP + phosphate + H(+). Part of the high-affinity ATP-driven potassium transport (or Kdp) system, which catalyzes the hydrolysis of ATP coupled with the electrogenic transport of potassium into the cytoplasm. This subunit is responsible for energy coupling to the transport system and for the release of the potassium ions to the cytoplasm. This is Potassium-transporting ATPase ATP-binding subunit from Shigella boydii serotype 4 (strain Sb227).